The primary structure comprises 290 residues: Elongation factor Ts, mitochondrial 1 (290 aa).

Belongs to the EF-Ts family.

The protein localises to the mitochondrion. Associates with the EF-Tu.GDP complex and induces the exchange of GDP to GTP. It remains bound to the aminoacyl-tRNA.EF-Tu.GTP complex up to the GTP hydrolysis stage on the ribosome. The sequence is that of Elongation factor Ts, mitochondrial 1 from Postia placenta (strain ATCC 44394 / Madison 698-R) (Brown rot fungus).